Here is a 424-residue protein sequence, read N- to C-terminus: Chloroquine resistance transporter (424 aa).

A compositionally biased stretch (basic residues) spans 1 to 10; it reads MTILKKKKKG. A disordered region spans residues 1 to 32; that stretch reads MTILKKKKKGSPQITPDERYRELDSHAQNESE. Over 1–57 the chain is Cytoplasmic; sequence MTILKKKKKGSPQITPDERYRELDSHAQNESEIQEDVPISRKIANFLKLAYNEIREN. Residues 16–29 are compositionally biased toward basic and acidic residues; the sequence is PDERYRELDSHAQN. Residues 58–78 form a helical membrane-spanning segment; it reads ISIYLLIIVYLCVCVMNKLLA. Residues 79-89 are Vacuolar-facing; sequence KRTLKKIGNYS. An N-linked (GlcNAc...) asparagine glycan is attached at asparagine 87. The helical transmembrane segment at 90-110 threads the bilayer; it reads FVTSETHNCICMVVFFALYFM. The Cytoplasmic portion of the chain corresponds to 111–124; the sequence is FGRRVMSAKERHRN. A helical transmembrane segment spans residues 125-145; that stretch reads FGVQFLLISLLDACSVIIAFI. The Vacuolar segment spans residues 146 to 153; that stretch reads GLTRTTGN. Residues 154 to 174 form a helical membrane-spanning segment; sequence IQSFVMQLSIPINMFFCFLIL. Residues 175-179 are Cytoplasmic-facing; it reads RYRYH. A helical membrane pass occupies residues 180-200; that stretch reads LFNYVGAFIIVVTIAVVEFML. At 201 to 208 the chain is on the vacuolar side; sequence SFETQEEN. A helical transmembrane segment spans residues 209–229; sequence SIVFNLVLIASLIPLSFSNMT. Over 230 to 246 the chain is Cytoplasmic; it reads REIVFKKYKINILRLNA. A helical membrane pass occupies residues 247-267; it reads VVSFFQIFTSCLMLPMYTLPF. Topologically, residues 268 to 316 are vacuolar; that stretch reads LKQINLPFSEIGTNIKNGFRCLFLGQNTIVENCGLGMSKMCDDCEGAWK. Intrachain disulfides connect cysteine 288-cysteine 311 and cysteine 300-cysteine 308. The chain crosses the membrane as a helical span at residues 317-337; the sequence is TFIAYSFFNICDNLITSFIIE. Residues 338 to 345 are Cytoplasmic-facing; sequence KFSTMTYT. The helical transmembrane segment at 346 to 366 threads the bilayer; that stretch reads IVSCIQGPAIAIAYYFKFLAG. At 367-376 the chain is on the vacuolar side; the sequence is DAVMQPRMLD. The helical transmembrane segment at 377 to 397 threads the bilayer; sequence FVTLFGYLFGSIIYRIGNIIL. Over 398–424 the chain is Cytoplasmic; it reads EKKRMMEAGNDDDSEGELTNADSIITH.

This sequence belongs to the CRT-like transporter family.

The protein resides in the vacuole membrane. Its function is as follows. Nutrient transporter. Involved in maintaining the osmotic homeostasis of the digestive vacuole. This Plasmodium vivax (strain Salvador I) protein is Chloroquine resistance transporter.